Consider the following 355-residue polypeptide: Erythronate-4-phosphate dehydrogenase (355 aa).

Residues S45 and T66 each contribute to the substrate site. D146 contacts NAD(+). The active site involves R206. D229 contacts NAD(+). E234 is an active-site residue. The Proton donor role is filled by H251. G254 contacts NAD(+). Y255 provides a ligand contact to substrate.

Belongs to the D-isomer specific 2-hydroxyacid dehydrogenase family. PdxB subfamily. Homodimer.

It localises to the cytoplasm. The enzyme catalyses 4-phospho-D-erythronate + NAD(+) = (R)-3-hydroxy-2-oxo-4-phosphooxybutanoate + NADH + H(+). It participates in cofactor biosynthesis; pyridoxine 5'-phosphate biosynthesis; pyridoxine 5'-phosphate from D-erythrose 4-phosphate: step 2/5. Catalyzes the oxidation of erythronate-4-phosphate to 3-hydroxy-2-oxo-4-phosphonooxybutanoate. In Acinetobacter baumannii (strain SDF), this protein is Erythronate-4-phosphate dehydrogenase.